The sequence spans 591 residues: ATP-dependent lipid A-core flippase (591 aa).

Helical transmembrane passes span 34 to 54, 71 to 91, 158 to 178, 258 to 278, and 285 to 305; these read LILA…LAVI, IWSV…CNFF, LVVI…TVII, LTPL…AVAL, and TLTA…FDPI. In terms of domain architecture, ABC transmembrane type-1 spans 35 to 317; the sequence is ILAVLLMAGA…LTNLASKMQK (283 aa). The region spanning 350 to 586 is the ABC transporter domain; sequence IEFRQIGHRF…GGLYATLYNM (237 aa). An ATP-binding site is contributed by 384–391; the sequence is GRSGSGKT.

This sequence belongs to the ABC transporter superfamily. Lipid exporter (TC 3.A.1.106) family. As to quaternary structure, homodimer.

Its subcellular location is the cell inner membrane. It catalyses the reaction ATP + H2O + lipid A-core oligosaccharideSide 1 = ADP + phosphate + lipid A-core oligosaccharideSide 2.. Involved in lipopolysaccharide (LPS) biosynthesis. Translocates lipid A-core from the inner to the outer leaflet of the inner membrane. Transmembrane domains (TMD) form a pore in the inner membrane and the ATP-binding domain (NBD) is responsible for energy generation. The protein is ATP-dependent lipid A-core flippase of Bordetella avium (strain 197N).